A 272-amino-acid chain; its full sequence is Phosphatidylglycerol--prolipoprotein diacylglyceryl transferase (272 aa).

The next 4 membrane-spanning stretches (helical) occupy residues 15 to 35, 53 to 73, 90 to 110, and 117 to 137; these read LGPL…LVLF, AFAV…WHVV, IWEG…CFFV, and VPPF…LCFA. R138 contacts a 1,2-diacyl-sn-glycero-3-phospho-(1'-sn-glycerol). Helical transmembrane passes span 174–194, 199–219, and 237–257; these read FHPI…ILLV, VFVK…VLYG, and FGLD…VLIA.

The protein belongs to the Lgt family.

The protein localises to the cell membrane. The enzyme catalyses L-cysteinyl-[prolipoprotein] + a 1,2-diacyl-sn-glycero-3-phospho-(1'-sn-glycerol) = an S-1,2-diacyl-sn-glyceryl-L-cysteinyl-[prolipoprotein] + sn-glycerol 1-phosphate + H(+). The protein operates within protein modification; lipoprotein biosynthesis (diacylglyceryl transfer). Catalyzes the transfer of the diacylglyceryl group from phosphatidylglycerol to the sulfhydryl group of the N-terminal cysteine of a prolipoprotein, the first step in the formation of mature lipoproteins. The chain is Phosphatidylglycerol--prolipoprotein diacylglyceryl transferase from Tropheryma whipplei (strain Twist) (Whipple's bacillus).